The chain runs to 34 residues: Small ribosomal subunit protein uS2c (34 aa).

The protein belongs to the universal ribosomal protein uS2 family.

The protein resides in the plastid. It is found in the chloroplast. This is Small ribosomal subunit protein uS2c (rps2) from Ochrosphaera neapolitana.